We begin with the raw amino-acid sequence, 1846 residues long: Peripheral-type benzodiazepine receptor-associated protein 1 (1846 aa).

3 disordered regions span residues 57 to 97 (EESS…GYSC), 281 to 318 (NQRE…DDVE), and 560 to 628 (GPKD…SEVE). Residues 576–587 (PKSSEPALTTLT) are compositionally biased toward polar residues. Low complexity predominate over residues 599–612 (SLSNSSRSESIHNS). An SH3 1 domain is found at 649-716 (ARIQVFLARY…PSNFVERVSD (68 aa)). A disordered region spans residues 726–785 (ELADSSHSSGPELSFLSGGGGGCSSGGQSSGGRSQPRPEEEAAGDELSLSPPPEGLGEPL). Over residues 742-755 (SGGGGGCSSGGQSS) the composition is skewed to gly residues. 3 consecutive Fibronectin type-III domains span residues 787–878 (VPYP…AGAG), 880–972 (VPSQ…TLPA), and 977–1075 (APLD…PALA). Disordered stretches follow at residues 1084 to 1107 (SCLS…GLGD), 1163 to 1219 (EPTL…LDSG), 1243 to 1302 (HSRN…SDEE), 1322 to 1476 (SIPE…PESS), 1492 to 1617 (YDSE…QDLP), 1704 to 1755 (LTEA…AAQK), and 1812 to 1846 (VPSN…RVQC). The segment covering 1202-1219 (TQKKPSIEACHGGDLDSG) has biased composition (basic and acidic residues). Over residues 1251 to 1265 (DIQEEEEEEEEEEEE) the composition is skewed to acidic residues. Over residues 1270–1283 (PCSSQKQVAGNSIR) the composition is skewed to polar residues. Residues 1324-1335 (PEEEEEEEEEEG) show a composition bias toward acidic residues. 2 stretches are compositionally biased toward basic and acidic residues: residues 1411-1420 (RPQDPREHCS) and 1545-1577 (AWEK…ESRG). The SH3 2 domain occupies 1616–1684 (LPVRVFVALF…PCNMVAEVAV (69 aa)). A compositionally biased stretch (polar residues) spans 1705–1719 (TEASGNGPSVYSSAH). The region spanning 1755–1822 (KTSRPMVAAF…PSNFLEGPGP (68 aa)) is the SH3 3 domain. Over residues 1817 to 1830 (LEGPGPESGSLESG) the composition is skewed to low complexity.

The protein belongs to the RIMBP family. As to quaternary structure, interacts with RIMS1 and RIMS2. Interacts with TSPO. Interacts with CACNA1A. As to expression, predominantly expressed in the brain.

It is found in the cytoplasm. Its subcellular location is the mitochondrion. Required for synaptic transmission regulation. It probably controls the recruitement of voltage-gated calcium channels to the presynaptic membrane, and modulates neurotransmitter release. This is Peripheral-type benzodiazepine receptor-associated protein 1 from Mus musculus (Mouse).